The following is a 367-amino-acid chain: Probable trehalose-phosphate phosphatase 4 (367 aa).

It belongs to the trehalose phosphatase family. The cofactor is a divalent metal cation.

It catalyses the reaction alpha,alpha-trehalose 6-phosphate + H2O = alpha,alpha-trehalose + phosphate. It participates in glycan biosynthesis; trehalose biosynthesis. In terms of biological role, removes the phosphate from trehalose 6-phosphate to produce free trehalose. Trehalose accumulation in plant may improve abiotic stress tolerance. This chain is Probable trehalose-phosphate phosphatase 4 (TPP4), found in Oryza sativa subsp. japonica (Rice).